We begin with the raw amino-acid sequence, 190 residues long: Xanthine phosphoribosyltransferase (190 aa).

Xanthine is bound by residues Leu20 and Asn27. Residue 128-132 (ANGKA) participates in 5-phospho-alpha-D-ribose 1-diphosphate binding. Lys156 is a binding site for xanthine.

The protein belongs to the purine/pyrimidine phosphoribosyltransferase family. Xpt subfamily. Homodimer.

It localises to the cytoplasm. The enzyme catalyses XMP + diphosphate = xanthine + 5-phospho-alpha-D-ribose 1-diphosphate. The protein operates within purine metabolism; XMP biosynthesis via salvage pathway; XMP from xanthine: step 1/1. Converts the preformed base xanthine, a product of nucleic acid breakdown, to xanthosine 5'-monophosphate (XMP), so it can be reused for RNA or DNA synthesis. This chain is Xanthine phosphoribosyltransferase, found in Pseudomonas fluorescens (strain SBW25).